Reading from the N-terminus, the 180-residue chain is ATP synthase subunit b, chloroplastic (180 aa).

A helical membrane pass occupies residues 28-48 (VTTLINIGVVLCLLIIFGKGF).

This sequence belongs to the ATPase B chain family. In terms of assembly, F-type ATPases have 2 components, F(1) - the catalytic core - and F(0) - the membrane proton channel. F(1) has five subunits: alpha(3), beta(3), gamma(1), delta(1), epsilon(1). F(0) has four main subunits: a(1), b(1), b'(1) and c(10-14). The alpha and beta chains form an alternating ring which encloses part of the gamma chain. F(1) is attached to F(0) by a central stalk formed by the gamma and epsilon chains, while a peripheral stalk is formed by the delta, b and b' chains.

Its subcellular location is the plastid. It is found in the chloroplast thylakoid membrane. In terms of biological role, f(1)F(0) ATP synthase produces ATP from ADP in the presence of a proton or sodium gradient. F-type ATPases consist of two structural domains, F(1) containing the extramembraneous catalytic core and F(0) containing the membrane proton channel, linked together by a central stalk and a peripheral stalk. During catalysis, ATP synthesis in the catalytic domain of F(1) is coupled via a rotary mechanism of the central stalk subunits to proton translocation. Its function is as follows. Component of the F(0) channel, it forms part of the peripheral stalk, linking F(1) to F(0). This Cuscuta obtusiflora (Peruvian dodder) protein is ATP synthase subunit b, chloroplastic.